The sequence spans 330 residues: Aspartate--ammonia ligase (330 aa).

This sequence belongs to the class-II aminoacyl-tRNA synthetase family. AsnA subfamily.

It is found in the cytoplasm. The enzyme catalyses L-aspartate + NH4(+) + ATP = L-asparagine + AMP + diphosphate + H(+). It functions in the pathway amino-acid biosynthesis; L-asparagine biosynthesis; L-asparagine from L-aspartate (ammonia route): step 1/1. This Escherichia coli O8 (strain IAI1) protein is Aspartate--ammonia ligase.